Consider the following 142-residue polypeptide: Large ribosomal subunit protein uL13 (142 aa).

Belongs to the universal ribosomal protein uL13 family. As to quaternary structure, part of the 50S ribosomal subunit.

In terms of biological role, this protein is one of the early assembly proteins of the 50S ribosomal subunit, although it is not seen to bind rRNA by itself. It is important during the early stages of 50S assembly. This chain is Large ribosomal subunit protein uL13, found in Pelobacter propionicus (strain DSM 2379 / NBRC 103807 / OttBd1).